The sequence spans 273 residues: DnaJ homolog subfamily C member 27 (273 aa).

Residues 1 to 18 (MEANMPKRKEPGRSLRIK) form a required for interaction with MAPK1 region. Residues 23-30 (GNAEVGKS), 71-75 (DMAGH), and 134-137 (NKID) each bind GTP. In terms of domain architecture, J spans 217–273 (GSWDMLGVKPGASRDEVNKACRKLAVLLHPDKCVAPGSEDAFKAVVNARTALLKNIK).

Belongs to the small GTPase superfamily. Rab family. As to quaternary structure, interacts directly with MAPK1 (wild-type and kinase-deficient forms). Interacts directly (in GTP-bound form) with MAP2K1 (wild-type and kinase-deficient forms).

The protein localises to the nucleus. Its function is as follows. GTPase which can activate the MEK/ERK pathway and induce cell transformation when overexpressed. May act as a nuclear scaffold for MAPK1, probably by association with MAPK1 nuclear export signal leading to enhanced ERK1/ERK2 signaling. This is DnaJ homolog subfamily C member 27 (DNAJC27) from Pongo abelii (Sumatran orangutan).